The sequence spans 519 residues: 2-isopropylmalate synthase (519 aa).

Residues 5-267 (VVIFDTTLRD…STNINYKEIY (263 aa)) enclose the Pyruvate carboxyltransferase domain. Aspartate 14, histidine 202, histidine 204, and asparagine 238 together coordinate Mn(2+). Residues 392–519 (SLKFFSVQSI…LKILKDFKKK (128 aa)) are regulatory domain.

Belongs to the alpha-IPM synthase/homocitrate synthase family. LeuA type 1 subfamily. Homodimer. Mn(2+) serves as cofactor.

The protein resides in the cytoplasm. The catalysed reaction is 3-methyl-2-oxobutanoate + acetyl-CoA + H2O = (2S)-2-isopropylmalate + CoA + H(+). It participates in amino-acid biosynthesis; L-leucine biosynthesis; L-leucine from 3-methyl-2-oxobutanoate: step 1/4. In terms of biological role, catalyzes the condensation of the acetyl group of acetyl-CoA with 3-methyl-2-oxobutanoate (2-ketoisovalerate) to form 3-carboxy-3-hydroxy-4-methylpentanoate (2-isopropylmalate). This chain is 2-isopropylmalate synthase, found in Buchnera aphidicola subsp. Acyrthosiphon pisum (strain APS) (Acyrthosiphon pisum symbiotic bacterium).